Consider the following 181-residue polypeptide: Insulin-like growth factor 2 (181 aa).

Residues 1-24 (MGIPMRKPLLVLLVFLALASCCYA) form the signal peptide. The b stretch occupies residues 25–52 (AYRPSETLCGGELVDTLQFVCGDRGFYF). 3 disulfides stabilise this stretch: Cys33/Cys71, Cys45/Cys84, and Cys70/Cys75. The interval 53–64 (SRPASRVNRRSR) is c. An a region spans residues 65 to 85 (GIVEECCFRSCDLALLETYCA). The interval 86 to 91 (TPAKSE) is d. Positions 92 to 181 (RDVSTPPTVL…ASPEASGHRK (90 aa)) are cleaved as a propeptide — e peptide. The tract at residues 151-181 (EAKRHRPLTARPTRDPAAHGGASPEASGHRK) is disordered. Thr163 carries an O-linked (GalNAc...) threonine glycan.

Belongs to the insulin family. As to quaternary structure, interacts with MYORG; this interaction is required for IGF2 secretion. Interacts with integrins ITGAV:ITGB3 and ITGA6:ITGB4; integrin-binding is required for IGF2 signaling. Interacts with IGFBP2. In terms of processing, proteolytically processed by PCSK4, proIGF2 is cleaved at Arg-128 and Arg-92 to generate big-IGF2 and mature IGF2.

The protein resides in the secreted. Functionally, the insulin-like growth factors possess growth-promoting activity. Major fetal growth hormone in mammals. Plays a key role in regulating fetoplacental development. IGF2 is influenced by placental lactogen. Also involved in tissue differentiation. In adults, involved in glucose metabolism in adipose tissue, skeletal muscle and liver. Acts as a ligand for integrin which is required for IGF2 signaling. Positively regulates myogenic transcription factor MYOD1 function by facilitating the recruitment of transcriptional coactivators, thereby controlling muscle terminal differentiation. Inhibits myoblast differentiation and modulates metabolism via increasing the mitochondrial respiration rate. In terms of biological role, preptin undergoes glucose-mediated co-secretion with insulin, and acts as a physiological amplifier of glucose-mediated insulin secretion. Exhibits osteogenic properties by increasing osteoblast mitogenic activity through phosphoactivation of MAPK1 and MAPK3. The polypeptide is Insulin-like growth factor 2 (Sus scrofa (Pig)).